The primary structure comprises 436 residues: Anaerobic glycerol-3-phosphate dehydrogenase subunit B (436 aa).

It belongs to the anaerobic G-3-P dehydrogenase subunit B family. Composed of a catalytic GlpA/B dimer and of membrane bound GlpC. It depends on FMN as a cofactor.

It carries out the reaction a quinone + sn-glycerol 3-phosphate = dihydroxyacetone phosphate + a quinol. Its pathway is polyol metabolism; glycerol degradation via glycerol kinase pathway; glycerone phosphate from sn-glycerol 3-phosphate (anaerobic route): step 1/1. Its function is as follows. Conversion of glycerol 3-phosphate to dihydroxyacetone. Uses fumarate or nitrate as electron acceptor. The polypeptide is Anaerobic glycerol-3-phosphate dehydrogenase subunit B (Vibrio cholerae serotype O1 (strain ATCC 39315 / El Tor Inaba N16961)).